The chain runs to 346 residues: 3-isopropylmalate dehydrogenase (346 aa).

76–87 (GPQWTDPNNRPE) is a binding site for NAD(+). Positions 94, 104, 132, and 217 each coordinate substrate. Residues D217, D241, and D245 each contribute to the Mg(2+) site. Residue 275–287 (GSAPDIANQNLAN) coordinates NAD(+).

It belongs to the isocitrate and isopropylmalate dehydrogenases family. LeuB type 1 subfamily. As to quaternary structure, homodimer. Mg(2+) serves as cofactor. The cofactor is Mn(2+).

It is found in the cytoplasm. It catalyses the reaction (2R,3S)-3-isopropylmalate + NAD(+) = 4-methyl-2-oxopentanoate + CO2 + NADH. It participates in amino-acid biosynthesis; L-leucine biosynthesis; L-leucine from 3-methyl-2-oxobutanoate: step 3/4. In terms of biological role, catalyzes the oxidation of 3-carboxy-2-hydroxy-4-methylpentanoate (3-isopropylmalate) to 3-carboxy-4-methyl-2-oxopentanoate. The product decarboxylates to 4-methyl-2 oxopentanoate. This chain is 3-isopropylmalate dehydrogenase, found in Staphylococcus haemolyticus (strain JCSC1435).